We begin with the raw amino-acid sequence, 222 residues long: UPF0173 metal-dependent hydrolase Nther_2337 (222 aa).

It belongs to the UPF0173 family.

This chain is UPF0173 metal-dependent hydrolase Nther_2337, found in Natranaerobius thermophilus (strain ATCC BAA-1301 / DSM 18059 / JW/NM-WN-LF).